The chain runs to 167 residues: MALLSLITPDFGLFFWQTVIFLVTLYLLSKFAWGPIMSAMKEREDSITDALSAADKARADIEKLQATNEALLAEARIERDKILADAHKAATTMMEDAKVKASTEGNRLMEAARVSIQTEKNAALHEVKNYAATLAVEIAEKILRKELNNAEEQKKLVSEYIKEVNLN.

A helical transmembrane segment spans residues 15–37 (FWQTVIFLVTLYLLSKFAWGPIM).

It belongs to the ATPase B chain family. F-type ATPases have 2 components, F(1) - the catalytic core - and F(0) - the membrane proton channel. F(1) has five subunits: alpha(3), beta(3), gamma(1), delta(1), epsilon(1). F(0) has three main subunits: a(1), b(2) and c(10-14). The alpha and beta chains form an alternating ring which encloses part of the gamma chain. F(1) is attached to F(0) by a central stalk formed by the gamma and epsilon chains, while a peripheral stalk is formed by the delta and b chains.

The protein resides in the cell inner membrane. Its function is as follows. F(1)F(0) ATP synthase produces ATP from ADP in the presence of a proton or sodium gradient. F-type ATPases consist of two structural domains, F(1) containing the extramembraneous catalytic core and F(0) containing the membrane proton channel, linked together by a central stalk and a peripheral stalk. During catalysis, ATP synthesis in the catalytic domain of F(1) is coupled via a rotary mechanism of the central stalk subunits to proton translocation. Functionally, component of the F(0) channel, it forms part of the peripheral stalk, linking F(1) to F(0). This Cytophaga hutchinsonii (strain ATCC 33406 / DSM 1761 / CIP 103989 / NBRC 15051 / NCIMB 9469 / D465) protein is ATP synthase subunit b.